Here is a 118-residue protein sequence, read N- to C-terminus: Cytochrome b-c1 complex subunit 7 (118 aa).

Positions 1 to 32 (MVHLTKTLRFINNPGFRKFYYGLQGYNKYGLY) are igE-binding. Immunodominant epitope; induces specific IgE antibody production in mice. Causes degranulation of rat basophilic leukemia (RBL) cells and the release of beta-hexosaminidase from them.

It belongs to the UQCRB/QCR7 family. As to quaternary structure, component of the ubiquinol-cytochrome c oxidoreductase (cytochrome b-c1 complex, complex III, CIII), a multisubunit enzyme composed of 3 respiratory subunits cytochrome b, cytochrome c1 and Rieske protein, 2 core protein subunits, and additional low-molecular weight protein subunits. The complex exists as an obligatory dimer and forms supercomplexes (SCs) in the inner mitochondrial membrane with cytochrome c oxidase (complex IV, CIV).

It is found in the mitochondrion inner membrane. In terms of biological role, component of the ubiquinol-cytochrome c oxidoreductase, a multisubunit transmembrane complex that is part of the mitochondrial electron transport chain which drives oxidative phosphorylation. The respiratory chain contains 3 multisubunit complexes succinate dehydrogenase (complex II, CII), ubiquinol-cytochrome c oxidoreductase (cytochrome b-c1 complex, complex III, CIII) and cytochrome c oxidase (complex IV, CIV), that cooperate to transfer electrons derived from NADH and succinate to molecular oxygen, creating an electrochemical gradient over the inner membrane that drives transmembrane transport and the ATP synthase. The cytochrome b-c1 complex catalyzes electron transfer from ubiquinol to cytochrome c, linking this redox reaction to translocation of protons across the mitochondrial inner membrane, with protons being carried across the membrane as hydrogens on the quinol. In the process called Q cycle, 2 protons are consumed from the matrix, 4 protons are released into the intermembrane space and 2 electrons are passed to cytochrome c. This is Cytochrome b-c1 complex subunit 7 from Dermatophagoides farinae (American house dust mite).